Consider the following 443-residue polypeptide: Xaa-Pro dipeptidase (443 aa).

Mn(2+) is bound by residues Asp246, Asp257, His339, Glu384, and Glu423.

The protein belongs to the peptidase M24B family. Bacterial-type prolidase subfamily. It depends on Mn(2+) as a cofactor.

It carries out the reaction Xaa-L-Pro dipeptide + H2O = an L-alpha-amino acid + L-proline. Its function is as follows. Splits dipeptides with a prolyl residue in the C-terminal position. This Salmonella arizonae (strain ATCC BAA-731 / CDC346-86 / RSK2980) protein is Xaa-Pro dipeptidase.